A 62-amino-acid chain; its full sequence is Large ribosomal subunit protein bL28 (62 aa).

The protein belongs to the bacterial ribosomal protein bL28 family.

The protein is Large ribosomal subunit protein bL28 of Wolinella succinogenes (strain ATCC 29543 / DSM 1740 / CCUG 13145 / JCM 31913 / LMG 7466 / NCTC 11488 / FDC 602W) (Vibrio succinogenes).